A 374-amino-acid chain; its full sequence is o-succinylbenzoate synthase (374 aa).

Lysine 164 functions as the Proton donor in the catalytic mechanism. Mg(2+) contacts are provided by aspartate 189, glutamate 214, and aspartate 239. The Proton acceptor role is filled by lysine 263.

The protein belongs to the mandelate racemase/muconate lactonizing enzyme family. MenC type 2 subfamily. In terms of assembly, homodimer. A divalent metal cation is required as a cofactor.

It carries out the reaction (1R,6R)-6-hydroxy-2-succinyl-cyclohexa-2,4-diene-1-carboxylate = 2-succinylbenzoate + H2O. It participates in quinol/quinone metabolism; 1,4-dihydroxy-2-naphthoate biosynthesis; 1,4-dihydroxy-2-naphthoate from chorismate: step 4/7. The protein operates within quinol/quinone metabolism; menaquinone biosynthesis. Converts 2-succinyl-6-hydroxy-2,4-cyclohexadiene-1-carboxylate (SHCHC) to 2-succinylbenzoate (OSB). Also acts as a N-succinylamino acid racemase (NSAR) that catalyzes the racemization of N-succinyl-L-phenylglycine. L.innocua has the menaquinone synthesis pathway, indicating that the species requires OSBS activity. However, the NSAR/OSBS is not encoded in the menaquinone operon, raising the possibility that both NSAR and OSBS are biological functions. The sequence is that of o-succinylbenzoate synthase from Listeria innocua serovar 6a (strain ATCC BAA-680 / CLIP 11262).